The primary structure comprises 338 residues: Heme A synthase (338 aa).

Helical transmembrane passes span 6–26 (ITKW…IGGI), 93–113 (GRIT…KGII), 118–138 (IAPY…GWYM), 154–174 (LAFH…QLIK), and 201–221 (VIYL…GLIY). Histidine 256 serves as a coordination point for heme. Transmembrane regions (helical) follow at residues 258-278 (LGGY…LKIE), 285-305 (IAYF…ITLL), and 308-328 (VPII…SVII). A heme-binding site is contributed by histidine 316.

The protein belongs to the COX15/CtaA family. Type 2 subfamily. In terms of assembly, interacts with CtaB. Heme b serves as cofactor.

It localises to the cell membrane. It catalyses the reaction Fe(II)-heme o + 2 A + H2O = Fe(II)-heme a + 2 AH2. The protein operates within porphyrin-containing compound metabolism; heme A biosynthesis; heme A from heme O: step 1/1. Catalyzes the conversion of heme O to heme A by two successive hydroxylations of the methyl group at C8. The first hydroxylation forms heme I, the second hydroxylation results in an unstable dihydroxymethyl group, which spontaneously dehydrates, resulting in the formyl group of heme A. The polypeptide is Heme A synthase (Rickettsia canadensis (strain McKiel)).